Consider the following 251-residue polypeptide: Cobalt transport protein CbiM (251 aa).

Residues 1–27 (MNKKKNTILIGLYFLVGIMLFPDRIYA) form the signal peptide. Transmembrane regions (helical) follow at residues 35-55 (LPVK…ALGI), 66-86 (GPGI…LSSL), 103-123 (LGAI…VLIF), 131-151 (GGLT…PFVA), 166-186 (WLSV…TTAT), and 208-228 (VFAT…VLIF).

Belongs to the CbiM family. In terms of assembly, forms an energy-coupling factor (ECF) transporter complex composed of an ATP-binding protein (A component, CbiO), a transmembrane protein (T component, CbiQ) and 2 possible substrate-capture proteins (S components, CbiM and CbiN) of unknown stoichimetry.

It is found in the cell membrane. It functions in the pathway cofactor biosynthesis; adenosylcobalamin biosynthesis. Its function is as follows. Part of the energy-coupling factor (ECF) transporter complex CbiMNOQ involved in cobalt import. The protein is Cobalt transport protein CbiM of Acetohalobium arabaticum (strain ATCC 49924 / DSM 5501 / Z-7288).